The following is a 217-amino-acid chain: Small ribosomal subunit protein uS3 (217 aa).

Positions 38-106 (IRKFIDNELK…KVHINVIEIK (69 aa)) constitute a KH type-2 domain.

It belongs to the universal ribosomal protein uS3 family. In terms of assembly, part of the 30S ribosomal subunit. Forms a tight complex with proteins S10 and S14.

Its function is as follows. Binds the lower part of the 30S subunit head. Binds mRNA in the 70S ribosome, positioning it for translation. The chain is Small ribosomal subunit protein uS3 from Staphylococcus epidermidis (strain ATCC 35984 / DSM 28319 / BCRC 17069 / CCUG 31568 / BM 3577 / RP62A).